The primary structure comprises 309 residues: Cytochrome c biogenesis protein CcsA (309 aa).

8 consecutive transmembrane segments (helical) span residues 18-38, 43-63, 73-93, 102-122, 148-168, 216-236, 250-267, and 279-299; these read LGLLVFYFLLINLPISLGAVF, SFAVRLITILVNLLITLQLLF, ISNLYESLYFLAWGITLGQLL, IIPSIAIPIELLIVSFACFVL, VMLSYAALIIGSLLSMSVLFI, SILIGFVLLTLGLISGAVWAN, TWAFISWLFYAAYLHMRI, and LASTGFLVVLVCYLGVNFLGI.

The protein belongs to the CcmF/CycK/Ccl1/NrfE/CcsA family. As to quaternary structure, may interact with ccs1.

It localises to the cellular thylakoid membrane. Functionally, required during biogenesis of c-type cytochromes (cytochrome c6 and cytochrome f) at the step of heme attachment. This chain is Cytochrome c biogenesis protein CcsA, found in Prochlorococcus marinus (strain MIT 9301).